The chain runs to 244 residues: 5-oxoprolinase subunit A (244 aa).

It belongs to the LamB/PxpA family. In terms of assembly, forms a complex composed of PxpA, PxpB and PxpC.

The catalysed reaction is 5-oxo-L-proline + ATP + 2 H2O = L-glutamate + ADP + phosphate + H(+). Its function is as follows. Catalyzes the cleavage of 5-oxoproline to form L-glutamate coupled to the hydrolysis of ATP to ADP and inorganic phosphate. This is 5-oxoprolinase subunit A from Shigella flexneri.